The primary structure comprises 438 residues: Enolase (438 aa).

Substrate contacts are provided by His159 and Glu168. Glu211 (proton donor) is an active-site residue. Positions 246, 297, and 322 each coordinate Mg(2+). Substrate is bound by residues Glu297 and Asp322. The active-site Proton acceptor is Lys347. Residues 374–377 (SHRS) and Lys398 contribute to the substrate site.

It belongs to the enolase family. As to quaternary structure, homodimer. The cofactor is Mg(2+).

Its subcellular location is the cytoplasm. The catalysed reaction is (2R)-2-phosphoglycerate = phosphoenolpyruvate + H2O. Its pathway is carbohydrate degradation; glycolysis; pyruvate from D-glyceraldehyde 3-phosphate: step 4/5. This is Enolase (ENO) from Alternaria alternata (Alternaria rot fungus).